The chain runs to 299 residues: Pyridoxal 5'-phosphate synthase subunit PdxS (299 aa).

Residue Asp-24 coordinates D-ribose 5-phosphate. The Schiff-base intermediate with D-ribose 5-phosphate role is filled by Lys-81. Gly-153 contributes to the D-ribose 5-phosphate binding site. Residue Arg-165 coordinates D-glyceraldehyde 3-phosphate. Residues Gly-219 and 240-241 (GS) each bind D-ribose 5-phosphate.

It belongs to the PdxS/SNZ family. In the presence of PdxT, forms a dodecamer of heterodimers.

It carries out the reaction aldehydo-D-ribose 5-phosphate + D-glyceraldehyde 3-phosphate + L-glutamine = pyridoxal 5'-phosphate + L-glutamate + phosphate + 3 H2O + H(+). Its pathway is cofactor biosynthesis; pyridoxal 5'-phosphate biosynthesis. Catalyzes the formation of pyridoxal 5'-phosphate from ribose 5-phosphate (RBP), glyceraldehyde 3-phosphate (G3P) and ammonia. The ammonia is provided by the PdxT subunit. Can also use ribulose 5-phosphate and dihydroxyacetone phosphate as substrates, resulting from enzyme-catalyzed isomerization of RBP and G3P, respectively. The chain is Pyridoxal 5'-phosphate synthase subunit PdxS from Methanococcus maripaludis (strain C6 / ATCC BAA-1332).